The following is a 412-amino-acid chain: Translation initiation factor 2 subunit gamma (412 aa).

The region spanning glutamine 8–glutamate 205 is the tr-type G domain. The segment at glycine 17–threonine 24 is G1. The Mg(2+) site is built by aspartate 20, threonine 24, glycine 45, and serine 47. Aspartate 20–threonine 25 serves as a coordination point for GTP. The G2 stretch occupies residues glycine 45 to arginine 49. Cysteine 60, cysteine 63, cysteine 72, and cysteine 75 together coordinate Zn(2+). A G3 region spans residues aspartate 89–glycine 92. GTP-binding positions include asparagine 145 to aspartate 148 and serine 183 to glutamine 185. A G4 region spans residues asparagine 145 to aspartate 148. Positions serine 183 to glutamine 185 are G5.

Belongs to the TRAFAC class translation factor GTPase superfamily. Classic translation factor GTPase family. EIF2G subfamily. In terms of assembly, heterotrimer composed of an alpha, a beta and a gamma chain. It depends on Mg(2+) as a cofactor.

It catalyses the reaction GTP + H2O = GDP + phosphate + H(+). EIF-2 functions in the early steps of protein synthesis by forming a ternary complex with GTP and initiator tRNA. The chain is Translation initiation factor 2 subunit gamma from Methanopyrus kandleri (strain AV19 / DSM 6324 / JCM 9639 / NBRC 100938).